We begin with the raw amino-acid sequence, 650 residues long: Fructose-1,6-bisphosphatase class 3 (650 aa).

This sequence belongs to the FBPase class 3 family. Requires Mn(2+) as cofactor.

The catalysed reaction is beta-D-fructose 1,6-bisphosphate + H2O = beta-D-fructose 6-phosphate + phosphate. It functions in the pathway carbohydrate biosynthesis; gluconeogenesis. This is Fructose-1,6-bisphosphatase class 3 from Staphylococcus xylosus.